Here is a 462-residue protein sequence, read N- to C-terminus: Zinc transporter zipt-7.2 (462 aa).

The chain crosses the membrane as a helical span at residues Leu-2–Leu-22. Positions His-39–Ala-134 are disordered. The segment covering His-40–Gly-51 has biased composition (basic residues). The segment covering Ala-65 to Ala-74 has biased composition (low complexity). The span at Ala-75–His-94 shows a compositional bias: basic and acidic residues. Residues His-111–His-120 are compositionally biased toward basic residues. The span at Ser-121–Glu-132 shows a compositional bias: basic and acidic residues. The chain crosses the membrane as a helical span at residues Ala-161 to Ile-181. N-linked (GlcNAc...) asparagine glycosylation occurs at Asn-184. The chain crosses the membrane as a helical span at residues Val-194–His-214. Positions Gly-219–His-239 are disordered. The helical transmembrane segment at Met-244–Val-264 threads the bilayer. Residues Glu-270–Asp-307 are disordered. The span at His-281–Asp-307 shows a compositional bias: basic and acidic residues. The N-linked (GlcNAc...) asparagine glycan is linked to Asn-326. A run of 3 helical transmembrane segments spans residues Ile-333–Val-353, Ala-376–Phe-396, and Ser-410–Pro-430. N-linked (GlcNAc...) asparagine glycosylation is present at Asn-435. A helical membrane pass occupies residues Thr-441–Tyr-461.

This sequence belongs to the ZIP transporter (TC 2.A.5) family. KE4/Catsup subfamily. Expressed in somatic tissues.

The protein localises to the membrane. Functionally, zinc transporter. In Caenorhabditis elegans, this protein is Zinc transporter zipt-7.2.